The chain runs to 201 residues: FMN-dependent NADH:quinone oxidoreductase (201 aa).

FMN contacts are provided by residues S10, S16–S18, M96–F99, and S140–G143.

This sequence belongs to the azoreductase type 1 family. As to quaternary structure, homodimer. Requires FMN as cofactor.

The enzyme catalyses 2 a quinone + NADH + H(+) = 2 a 1,4-benzosemiquinone + NAD(+). It catalyses the reaction N,N-dimethyl-1,4-phenylenediamine + anthranilate + 2 NAD(+) = 2-(4-dimethylaminophenyl)diazenylbenzoate + 2 NADH + 2 H(+). Quinone reductase that provides resistance to thiol-specific stress caused by electrophilic quinones. In terms of biological role, also exhibits azoreductase activity. Catalyzes the reductive cleavage of the azo bond in aromatic azo compounds to the corresponding amines. This chain is FMN-dependent NADH:quinone oxidoreductase, found in Cronobacter sakazakii (strain ATCC BAA-894) (Enterobacter sakazakii).